Here is a 248-residue protein sequence, read N- to C-terminus: Acetylglutamate kinase (248 aa).

Substrate contacts are provided by residues 41–42 (GG), Arg63, and Asn155.

The protein belongs to the acetylglutamate kinase family. ArgB subfamily.

Its subcellular location is the cytoplasm. The enzyme catalyses N-acetyl-L-glutamate + ATP = N-acetyl-L-glutamyl 5-phosphate + ADP. It functions in the pathway amino-acid biosynthesis; L-arginine biosynthesis; N(2)-acetyl-L-ornithine from L-glutamate: step 2/4. In terms of biological role, catalyzes the ATP-dependent phosphorylation of N-acetyl-L-glutamate. The chain is Acetylglutamate kinase from Lactiplantibacillus plantarum (strain ATCC BAA-793 / NCIMB 8826 / WCFS1) (Lactobacillus plantarum).